Consider the following 333-residue polypeptide: Ribosomal RNA small subunit methyltransferase H (333 aa).

S-adenosyl-L-methionine is bound by residues 43 to 45 (GGH), Asp62, Tyr89, Asp110, and Gln117. A disordered region spans residues 312 to 333 (RLRAARRIRTTPTRPSPRRRRP).

It belongs to the methyltransferase superfamily. RsmH family.

It localises to the cytoplasm. The enzyme catalyses cytidine(1402) in 16S rRNA + S-adenosyl-L-methionine = N(4)-methylcytidine(1402) in 16S rRNA + S-adenosyl-L-homocysteine + H(+). Its function is as follows. Specifically methylates the N4 position of cytidine in position 1402 (C1402) of 16S rRNA. This Beutenbergia cavernae (strain ATCC BAA-8 / DSM 12333 / CCUG 43141 / JCM 11478 / NBRC 16432 / NCIMB 13614 / HKI 0122) protein is Ribosomal RNA small subunit methyltransferase H.